Consider the following 550-residue polypeptide: Dihydroxy-acid dehydratase (550 aa).

Asp78 is a Mg(2+) binding site. Cys119 contributes to the [2Fe-2S] cluster binding site. Residues Asp120 and Lys121 each contribute to the Mg(2+) site. At Lys121 the chain carries N6-carboxylysine. A [2Fe-2S] cluster-binding site is contributed by Cys191. Glu440 lines the Mg(2+) pocket. Ser466 functions as the Proton acceptor in the catalytic mechanism.

It belongs to the IlvD/Edd family. Homodimer. [2Fe-2S] cluster is required as a cofactor. Requires Mg(2+) as cofactor.

The catalysed reaction is (2R)-2,3-dihydroxy-3-methylbutanoate = 3-methyl-2-oxobutanoate + H2O. The enzyme catalyses (2R,3R)-2,3-dihydroxy-3-methylpentanoate = (S)-3-methyl-2-oxopentanoate + H2O. The protein operates within amino-acid biosynthesis; L-isoleucine biosynthesis; L-isoleucine from 2-oxobutanoate: step 3/4. It participates in amino-acid biosynthesis; L-valine biosynthesis; L-valine from pyruvate: step 3/4. Functions in the biosynthesis of branched-chain amino acids. Catalyzes the dehydration of (2R,3R)-2,3-dihydroxy-3-methylpentanoate (2,3-dihydroxy-3-methylvalerate) into 2-oxo-3-methylpentanoate (2-oxo-3-methylvalerate) and of (2R)-2,3-dihydroxy-3-methylbutanoate (2,3-dihydroxyisovalerate) into 2-oxo-3-methylbutanoate (2-oxoisovalerate), the penultimate precursor to L-isoleucine and L-valine, respectively. The chain is Dihydroxy-acid dehydratase from Methanococcus aeolicus (strain ATCC BAA-1280 / DSM 17508 / OCM 812 / Nankai-3).